The following is a 390-amino-acid chain: MTDISDESNIGYEEEVEEEIMEDDLDINNDGCDGEDKKKNSGFLKQFASKQPFYKMSLPISYSEPRSFLEKLSDQGSFLDILLKVKNIENEDDRFLEILKFYLSGWIQQKIAKSPFNPVIGETYQCKWVHKDGSTTEYIAEQISHHPPSSSFCMHNQQNGVIFHSHLSPTSKFWGNSLENSMEGKLVYEIPSLQEEYIVEAPKIIVKGVLVGSLSTETVGSTNLTCKKTGYSAEIEFKGKGLFKSKHSLLVKVKHPSSKKALYTLEGKFDGTVSITSTKTGKTTAFFDINSDQIQPITSPLHELEENNSRVVWKHVIENLLNNNEDEASKQKTIVEENQRNLAKTREGKPWIPKNFIKVDNDDNEDSANQNNVYYYSKLIEIRKEIMKNN.

It belongs to the OSBP family.

In Dictyostelium discoideum (Social amoeba), this protein is Oxysterol-binding protein 10 (osbJ).